We begin with the raw amino-acid sequence, 571 residues long: Protein EARLY STARVATION 1, chloroplastic (571 aa).

Disordered regions lie at residues 142–162 (RHSS…KDAG) and 215–254 (GSYR…TEHD). The segment covering 145–155 (SCSSQSLPQQQ) has biased composition (low complexity).

The protein belongs to the ESV1 family.

The protein resides in the plastid. Its subcellular location is the chloroplast stroma. In terms of biological role, binds preferentially to highly ordered alpha-glucans, such as starch and crystalline maltodextrins. Involved in the organization of the starch granule matrix, thus influencing starch turnover by modulating the accessibility of starch polymers to modifying and degrading enzymes. Required for the control of starch degradation in leaves and starch distribution in nonphotosynthetic parts. Promotes gravitropic responses, negative in shoots but positive in roots, by facilitating starch granules (statoliths) formation in hypocotyls and roots columella. In Marchantia polymorpha (Common liverwort), this protein is Protein EARLY STARVATION 1, chloroplastic.